The sequence spans 366 residues: DNA integrity scanning protein DisA (366 aa).

The DAC domain maps to Val21–Pro159. Residues Gly88, Leu106, and Thr119–Ser123 each bind ATP.

This sequence belongs to the DisA family. Homooctamer. It depends on Mg(2+) as a cofactor.

It catalyses the reaction 2 ATP = 3',3'-c-di-AMP + 2 diphosphate. Its function is as follows. Participates in a DNA-damage check-point. DisA forms globular foci that rapidly scan along the chromosomes searching for lesions. Also has diadenylate cyclase activity, catalyzing the condensation of 2 ATP molecules into cyclic di-AMP (c-di-AMP). c-di-AMP likely acts as a signaling molecule that may couple DNA integrity with a cellular process. The protein is DNA integrity scanning protein DisA of Corynebacterium glutamicum (strain R).